Reading from the N-terminus, the 303-residue chain is N-acetyl-D-glucosamine kinase (303 aa).

Residues G4–K11 and G133–V140 each bind ATP. Zn(2+) contacts are provided by H157, C177, C179, and C184.

Belongs to the ROK (NagC/XylR) family. NagK subfamily.

It carries out the reaction N-acetyl-D-glucosamine + ATP = N-acetyl-D-glucosamine 6-phosphate + ADP + H(+). It functions in the pathway cell wall biogenesis; peptidoglycan recycling. Its function is as follows. Catalyzes the phosphorylation of N-acetyl-D-glucosamine (GlcNAc) derived from cell-wall degradation, yielding GlcNAc-6-P. In Yersinia enterocolitica serotype O:8 / biotype 1B (strain NCTC 13174 / 8081), this protein is N-acetyl-D-glucosamine kinase.